Reading from the N-terminus, the 159-residue chain is MRFLVWVFFVGLVTFVSGTHAISKLANSNEPQSTQLTMKDIDTLTRLLFVEDGDAAKRFLRSNANQDLTTANDDSDVKEEERGLLPSKVTNLISKAKNGWAKWKANALEKAFQHMMKQGETPTSLAKRLEIGGAAELRYEKVYEKYTAWWINYHTVAGT.

The N-terminal stretch at 1 to 18 (MRFLVWVFFVGLVTFVSG) is a signal peptide. The RxLR-dEER motif lies at 58-82 (RFLRSNANQDLTTANDDSDVKEEER). Residues 109-159 (EKAFQHMMKQGETPTSLAKRLEIGGAAELRYEKVYEKYTAWWINYHTVAGT) are RABA-binding domain.

It belongs to the RxLR effector family. As to quaternary structure, interacts with potato RABA GTPases including RABA1a, RABA2a and RABA4a.

The protein resides in the secreted. Its subcellular location is the host cell membrane. It localises to the host endomembrane system. Its function is as follows. Effector protein that contributes to pathogen virulence. Targets members of the RABA GTPases subfamily to inhibit vesicular secretion, leading to an accumulation of secretory proteins in the endoplasmic reticulum. This is RxLR effector protein 24 from Phytophthora infestans (strain T30-4) (Potato late blight agent).